The chain runs to 192 residues: Ribosome maturation factor RimM (192 aa).

Residues 97–172 (EDEYYLADLI…VVLADPPALV (76 aa)) form the PRC barrel domain. The disordered stretch occupies residues 168 to 192 (PPALVGEPEGPESPAEDDDGERHYD).

Belongs to the RimM family. As to quaternary structure, binds ribosomal protein uS19.

It localises to the cytoplasm. Its function is as follows. An accessory protein needed during the final step in the assembly of 30S ribosomal subunit, possibly for assembly of the head region. Essential for efficient processing of 16S rRNA. May be needed both before and after RbfA during the maturation of 16S rRNA. It has affinity for free ribosomal 30S subunits but not for 70S ribosomes. The polypeptide is Ribosome maturation factor RimM (Caulobacter sp. (strain K31)).